A 431-amino-acid polypeptide reads, in one-letter code: MKSYVEIVDVMARQILDSRANPTVEVEVVLEDGTVGRASVPSGASTGQFEAVELRDNDKAQYLGKSVLNAVDNVNETIATELIGMNVFDQTLIDQTMLEIDGTENKSKLGANAMLGVSLAVARAAAEYLGISLYQYLGGVNAKVLPVPMMNIVNGGKHADNNVDFQEFMIMPAGAPSFSEALRSCAEVYHTLKSLLQSKGLETAVGDEGGFAPNLNSNEEAIQIILEAVTKAGYEPGKDMFIAMDPASTEFYENGKYNLKGEGKVYTSEEMVEVYANLVEKYPIISLEDGMAEEDWDGWKLLTDRIGDKVQLVGDDLFVTNTKRLSKGIQLGVANSILIKLNQIGTLTETLNAIEMAQRAGYTAVVSHRSGETEDTTISDLVVAVNAGQIKTGAPARTERVAKYNQLLRIEEELGEVAEFRGLNAFYNIKK.

Gln166 contributes to the (2R)-2-phosphoglycerate binding site. Residue Glu208 is the Proton donor of the active site. 3 residues coordinate Mg(2+): Asp245, Glu288, and Asp315. Positions 340, 369, 370, and 391 each coordinate (2R)-2-phosphoglycerate. The active-site Proton acceptor is Lys340.

The protein belongs to the enolase family. Mg(2+) serves as cofactor.

The protein resides in the cytoplasm. It localises to the secreted. Its subcellular location is the cell surface. It catalyses the reaction (2R)-2-phosphoglycerate = phosphoenolpyruvate + H2O. It functions in the pathway carbohydrate degradation; glycolysis; pyruvate from D-glyceraldehyde 3-phosphate: step 4/5. Its function is as follows. Catalyzes the reversible conversion of 2-phosphoglycerate (2-PG) into phosphoenolpyruvate (PEP). It is essential for the degradation of carbohydrates via glycolysis. The sequence is that of Enolase from Clostridium acetobutylicum (strain ATCC 824 / DSM 792 / JCM 1419 / IAM 19013 / LMG 5710 / NBRC 13948 / NRRL B-527 / VKM B-1787 / 2291 / W).